A 470-amino-acid polypeptide reads, in one-letter code: uncharacterized protein (470 aa).

The N-terminal stretch at Met1–Tyr24 is a signal peptide.

This is an uncharacterized protein from Mycoplasma capricolum subsp. capricolum (strain California kid / ATCC 27343 / NCTC 10154).